A 687-amino-acid chain; its full sequence is Fork-head transcriptional regulator 2 (687 aa).

Positions 1-23 are disordered; it reads MSAQFITPKKRPHSPLDSNELLP. An FHA domain is found at 82–146; the sequence is VSIGRNIELS…NGARIDGQKV (65 aa). Over residues 226-241 the composition is skewed to polar residues; it reads SPSSISANSLQSNLDQ. Positions 226–246 are disordered; the sequence is SPSSISANSLQSNLDQDLSKE. Residues 252–350 constitute a DNA-binding region (fork-head); it reads KPPYSYATMI…SDGTISKTRR (99 aa). 3 disordered regions span residues 385-449, 472-569, and 584-687; these read AASI…RYTP, QLGR…IGLN, and PERG…MIDS. The segment covering 389-410 has biased composition (low complexity); that stretch reads PQQQKQQQQQQKRPPQQQNSQP. Positions 411-442 are enriched in polar residues; sequence HLSQPHYTIPSNPMQTNSMGYIPQSNIYNMSN. Over residues 472 to 490 the composition is skewed to low complexity; sequence QLGRPQGQLGQPMMQPQQQ. The segment covering 491-540 has biased composition (polar residues); the sequence is SYTSSNIKTEPSSPKRNPSISNNTPKMAKGTVSTESHSRSTSYTTTQLHE. 2 stretches are compositionally biased toward low complexity: residues 542 to 563 and 589 to 624; these read SNFN…TTTN and KGNP…PNTN. The segment covering 625-659 has biased composition (polar residues); sequence QSSPAFWNFVQFSTPNGQSPVRKSSEEVGNNSPTL. Positions 663–670 match the Nuclear localization signal motif; the sequence is IKREREND.

Its subcellular location is the nucleus. In terms of biological role, transcription factor required for the morphogenesis of true hyphal as well as yeast cells. Contributes to virulence. The polypeptide is Fork-head transcriptional regulator 2 (FKH2) (Candida albicans (strain SC5314 / ATCC MYA-2876) (Yeast)).